The chain runs to 490 residues: MARFGTQKLYIDGGYVDAGSDATFEAINPATGEVLAHVQRATQADVEKAVESAERGQKIWAAMTAMQRSRILRRAVDILRERNDELAMLETLDTGKSYSETRYVDIVTGADVLEYYAGLVPAIEGEQIPLRESSFVYTRREPLGVTVGIGAWNYPIQIALWKSAPALAAGNAMIFKPSEVTSLTTLKLAEIYTEAGLPDGVFNVLTGSGREVGTWLTEHPRIEKVSFTGGTTTGKKVMASASSSSLKEVTMELGGKSPLIICADADLDKAADIAMMANFYSSGQVCTNGTRVFIPAQMKAAFEAKIAERVARIRAGNPEDENTNFGPLVSFQHMESVLGYIAKGKQEGARVLCGGERLTEGDFAKGAFVAPTVFTDCTDDMTIVKEEIFGPVMSILTYETEEEVIRRANDTEYGLAAGVCTNDITRAHRIIHKLEAGICWINAWGESPAEMPVGGYKQSGVGRENGISSLAQYTRIKSVQVELGGYSSVF.

Residues Ile-27 and Asp-93 each contribute to the K(+) site. Position 150 to 152 (150 to 152 (GAW)) interacts with NAD(+). Lys-162 serves as the catalytic Charge relay system. 176–179 (KPSE) provides a ligand contact to NAD(+). Val-180 serves as a coordination point for K(+). Residue 230-233 (GTTT) participates in NAD(+) binding. Residue Leu-246 participates in K(+) binding. Glu-252 (proton acceptor) is an active-site residue. The NAD(+) site is built by Gly-254, Cys-286, and Glu-387. Cys-286 acts as the Nucleophile in catalysis. Cys-286 is subject to Cysteine sulfenic acid (-SOH). Residues Lys-457 and Gly-460 each coordinate K(+). The active-site Charge relay system is the Glu-464.

It belongs to the aldehyde dehydrogenase family. As to quaternary structure, dimer of dimers. It depends on K(+) as a cofactor.

It catalyses the reaction betaine aldehyde + NAD(+) + H2O = glycine betaine + NADH + 2 H(+). The protein operates within amine and polyamine biosynthesis; betaine biosynthesis via choline pathway; betaine from betaine aldehyde: step 1/1. Its function is as follows. Involved in the biosynthesis of the osmoprotectant glycine betaine. Catalyzes the irreversible oxidation of betaine aldehyde to the corresponding acid. The protein is Betaine aldehyde dehydrogenase of Pseudomonas putida (strain W619).